A 652-amino-acid polypeptide reads, in one-letter code: 2',3'-cyclic-nucleotide 2'-phosphodiesterase/3'-nucleotidase (652 aa).

The first 24 residues, 1–24 (MFKRPLTLSLLASLIALTTSTAQA), serve as a signal peptide directing secretion. Residues aspartate 36, histidine 38, aspartate 81, asparagine 121, histidine 230, histidine 262, and histidine 264 each contribute to the a divalent metal cation site. Substrate-binding positions include tyrosine 445 and 549-555 (YRAYSGK).

The protein belongs to the 5'-nucleotidase family. Requires a divalent metal cation as cofactor.

It localises to the periplasm. It catalyses the reaction a nucleoside 2',3'-cyclic phosphate + H2O = a nucleoside 3'-phosphate + H(+). It carries out the reaction a ribonucleoside 3'-phosphate + H2O = a ribonucleoside + phosphate. Its function is as follows. This bifunctional enzyme catalyzes two consecutive reactions during ribonucleic acid degradation. Converts a 2',3'-cyclic nucleotide to a 3'-nucleotide and then the 3'-nucleotide to the corresponding nucleoside and phosphate. In Yersinia enterocolitica, this protein is 2',3'-cyclic-nucleotide 2'-phosphodiesterase/3'-nucleotidase (cpdB).